An 86-amino-acid chain; its full sequence is Conotoxin Lt15a (86 aa).

The first 23 residues, 1 to 23, serve as a signal peptide directing secretion; that stretch reads MEKLTILILVATVLLAIQVLVQS. The propeptide occupies 24–49; sequence DGENPVKGRVKHYAAKRFSALFRGPR.

Belongs to the conotoxin O2 superfamily. Contains 4 disulfide bonds. As to expression, expressed by the venom duct.

Its subcellular location is the secreted. This is Conotoxin Lt15a from Conus litteratus (Lettered cone).